The primary structure comprises 320 residues: Phospho-N-acetylmuramoyl-pentapeptide-transferase (320 aa).

Helical transmembrane passes span 6–26 (FLTP…LFIG), 54–74 (MGGL…AIWL), 81–101 (LWIA…DDFI), 117–137 (LAGQ…EGFS), 145–165 (IGTI…LVGF), 175–195 (IDGL…IIAF), 200–220 (IDVA…LIFN), 226–246 (IFMG…MSIL), 251–271 (FSLL…MLQV), and 300–320 (RIDI…LLIF).

Belongs to the glycosyltransferase 4 family. MraY subfamily. The cofactor is Mg(2+).

It localises to the cell membrane. The catalysed reaction is UDP-N-acetyl-alpha-D-muramoyl-L-alanyl-gamma-D-glutamyl-L-lysyl-D-alanyl-D-alanine + di-trans,octa-cis-undecaprenyl phosphate = Mur2Ac(oyl-L-Ala-gamma-D-Glu-L-Lys-D-Ala-D-Ala)-di-trans,octa-cis-undecaprenyl diphosphate + UMP. Its pathway is cell wall biogenesis; peptidoglycan biosynthesis. Functionally, catalyzes the initial step of the lipid cycle reactions in the biosynthesis of the cell wall peptidoglycan: transfers peptidoglycan precursor phospho-MurNAc-pentapeptide from UDP-MurNAc-pentapeptide onto the lipid carrier undecaprenyl phosphate, yielding undecaprenyl-pyrophosphoryl-MurNAc-pentapeptide, known as lipid I. The chain is Phospho-N-acetylmuramoyl-pentapeptide-transferase from Latilactobacillus sakei subsp. sakei (strain 23K) (Lactobacillus sakei subsp. sakei).